A 440-amino-acid chain; its full sequence is uncharacterized protein (440 aa).

2 disordered regions span residues cysteine 49–leucine 81 and leucine 162–glutamate 295. The segment covering histidine 55–serine 80 has biased composition (polar residues). Basic and acidic residues predominate over residues tyrosine 249–serine 266. Positions serine 274 to glycine 284 are enriched in low complexity.

It belongs to the tymoviridae protein p69 family.

This is an uncharacterized protein from Erysimum latent virus (ELV).